The following is a 605-amino-acid chain: Cystathionine gamma-synthase-like enzyme iboG1 (605 aa).

A substrate-binding site is contributed by Tyr-289. The residue at position 393 (Lys-393) is an N6-(pyridoxal phosphate)lysine.

The protein belongs to the trans-sulfuration enzymes family. Pyridoxal 5'-phosphate is required as a cofactor.

Its pathway is secondary metabolite biosynthesis. Functionally, cystathionine gamma-synthase-like enzyme; part of the gene cluster that mediates the biosynthesis of the psychoactive metabolites ibotenic acid and muscimol. The first committed step is glutamate hydroxylation by the 2-oxoglutarate-dependent dioxygenase iboH, and the last step is decarboxylation of ibotenic acid to muscimol by the decarboxylase iboD. The order of the intermediate reactions is somewhat ambiguous. IboA likely activates the carboxylic acid at position 5 to introduce an amide bond, and the flavin monooxygenase iboF generates the N-O bond. There are several options for the latter step. One option is that iboF directly hydroxylates the amide nitrogen formed by iboA to produce a hydroxamic acid species. Another option is that iboF hydroxylates an external N-containing compound, whose resulting N-O bond is subsequently introduced into the hydroxyglutamate scaffold. The paralogous PLP-dependent cystathionine gamma-synthase-like enzymes iboG1 and iboG2 are likely involved in substitution of the OH group at position 3 by the O-N moiety. The first cyclic intermediate is most probably tricholomic acid which is likely desaturated to ibotenic acid by the cytochrome P450 monooxygenase iboC. This Amanita muscaria (strain Koide BX008) protein is Cystathionine gamma-synthase-like enzyme iboG1 (iboG1).